We begin with the raw amino-acid sequence, 545 residues long: RNA-directed RNA polymerase beta chain (545 aa).

Positions 243 to 373 (RLAQQGSVDG…PNLRKTFVSG (131 aa)) constitute a RdRp catalytic domain.

In terms of assembly, part of the viral RNA-dependent RNA polymerase complex, the other subunits are probably the host ribosomal protein S1, EF-Tu and EF-Ts.

The enzyme catalyses RNA(n) + a ribonucleoside 5'-triphosphate = RNA(n+1) + diphosphate. Its function is as follows. This is the catalytic subunit of the viral RNA-dependent RNA polymerase complex. This complex is involved in viral RNA replication that produces (+)-stranded genomes via a complementary, (-)-stranded intermediate. In Escherichia coli (Bacteriophage MS2), this protein is RNA-directed RNA polymerase beta chain.